Reading from the N-terminus, the 1057-residue chain is uncharacterized protein (1057 aa).

Belongs to the IIV-6 261R/396L/443R family.

This is an uncharacterized protein from Acheta domesticus (House cricket).